The chain runs to 117 residues: NLIQFSNMIKCAIPGSRPLFQYADYGCYCGPGGHGTPVDELDRCCKIHDDCYGEAGKKGCFPKLTLYSWKCTEKVPTCNAKSRCKDFVCACDAEAAKCFAKAPYIKENYNINTKTRC.

Disulfide bonds link C11–C71, C27–C117, C29–C45, C44–C98, C51–C91, C60–C84, and C78–C89. Positions 28, 30, and 32 each coordinate Ca(2+). H48 is a catalytic residue. D49 contacts Ca(2+). D92 is an active-site residue.

The protein belongs to the phospholipase A2 family. Group I subfamily. D49 sub-subfamily. Requires Ca(2+) as cofactor. Expressed by the venom gland.

It localises to the secreted. It catalyses the reaction a 1,2-diacyl-sn-glycero-3-phosphocholine + H2O = a 1-acyl-sn-glycero-3-phosphocholine + a fatty acid + H(+). Functionally, PLA2 catalyzes the calcium-dependent hydrolysis of the 2-acyl groups in 3-sn-phosphoglycerides. In Pseudechis porphyriacus (Red-bellied black snake), this protein is Basic phospholipase A2 pseudexin B chain.